Here is a 177-residue protein sequence, read N- to C-terminus: Protein GrpE (177 aa).

It belongs to the GrpE family. In terms of assembly, homodimer. It depends on K(+) as a cofactor.

The protein resides in the cytoplasm. Functionally, participates actively in the response to hyperosmotic and heat shock by preventing the aggregation of stress-denatured proteins, in association with DnaK and GrpE. It is the nucleotide exchange factor for DnaK and may function as a thermosensor. Unfolded proteins bind initially to DnaJ; upon interaction with the DnaJ-bound protein, DnaK hydrolyzes its bound ATP, resulting in the formation of a stable complex. GrpE releases ADP from DnaK; ATP binding to DnaK triggers the release of the substrate protein, thus completing the reaction cycle. Several rounds of ATP-dependent interactions between DnaJ, DnaK and GrpE are required for fully efficient folding. The protein is Protein GrpE of Thermus thermophilus (strain ATCC 27634 / DSM 579 / HB8).